Here is a 283-residue protein sequence, read N- to C-terminus: Mitochondrial outer membrane protein porin (283 aa).

This sequence belongs to the eukaryotic mitochondrial porin family.

The protein resides in the mitochondrion outer membrane. Its function is as follows. Forms a channel through the cell membrane that allows diffusion of small hydrophilic molecules. The channel adopts an open conformation at low or zero membrane potential and a closed conformation at potentials above 30-40 mV. The open state has a weak anion selectivity whereas the closed state is cation-selective. This is Mitochondrial outer membrane protein porin from Neurospora crassa (strain ATCC 24698 / 74-OR23-1A / CBS 708.71 / DSM 1257 / FGSC 987).